The following is a 216-amino-acid chain: HTH-type transcriptional regulator EthR (216 aa).

Over residues 1-10 (MTTSAASQAS) the composition is skewed to polar residues. The interval 1-24 (MTTSAASQASLPRGRRTARPSGDD) is disordered. Residues 23–83 (DDRELAILAT…TLLDRVVNQA (61 aa)) enclose the HTH tetR-type domain. A DNA-binding region (H-T-H motif) is located at residues 46–65 (SVDDLAKGAGISRPTFYFYF).

As to quaternary structure, homodimer.

Involved in the repression of the monooxygenase EthA which is responsible of the formation of the active metabolite of ethionamide (ETH). This chain is HTH-type transcriptional regulator EthR (ethR), found in Mycobacterium bovis (strain ATCC BAA-935 / AF2122/97).